We begin with the raw amino-acid sequence, 207 residues long: Small ribosomal subunit protein uS4c (207 aa).

The 65-residue stretch at 92-156 folds into the S4 RNA-binding domain; that stretch reads MRLDNILFRL…YQSIITKRIE (65 aa).

Belongs to the universal ribosomal protein uS4 family. Part of the 30S ribosomal subunit. Contacts protein S5. The interaction surface between S4 and S5 is involved in control of translational fidelity.

The protein resides in the plastid. It is found in the chloroplast. One of the primary rRNA binding proteins, it binds directly to 16S rRNA where it nucleates assembly of the body of the 30S subunit. In terms of biological role, with S5 and S12 plays an important role in translational accuracy. This is Small ribosomal subunit protein uS4c (rps4) from Equisetum arvense (Field horsetail).